Consider the following 288-residue polypeptide: CBY1-interacting BAR domain-containing protein 2 (288 aa).

Positions 6–217 (SRDSQVRVME…ESYDLEKDLE (212 aa)) are BAR-like. Disordered stretches follow at residues 133-157 (QKSPSDRQTISQAETSVQRASVDAS) and 256-288 (TIRSQRKEAVSEDDSAEEDPVEDLRGQAQRLNQ). A compositionally biased stretch (polar residues) spans 138–157 (DRQTISQAETSVQRASVDAS). The segment covering 266–276 (SEDDSAEEDPV) has biased composition (acidic residues).

Belongs to the CIBAR family. In terms of assembly, homodimer (via BAR-like domain). Heterodimer (via BAR-like domain) with FAM92A. Interacts with CBY1.

The protein localises to the cytoplasm. It is found in the cytoskeleton. It localises to the microtubule organizing center. The protein resides in the centrosome. Its subcellular location is the centriole. The protein localises to the cilium basal body. May play a role in ciliogenesis. In cooperation with CBY1 may facilitate ciliogenesis likely by the recruitment and fusion of endosomal vesicles at distal appendages during early stages of ciliogenesis. The protein is CBY1-interacting BAR domain-containing protein 2 (CIBAR2) of Bos taurus (Bovine).